Reading from the N-terminus, the 237-residue chain is Thrombin-like enzyme agkihpin-2 (237 aa).

A propeptide is located at residue Met1. The Peptidase S1 domain occupies 2–228; it reads ILGDDECNIN…HLDWIENIIA (227 aa). Cys27 and Cys43 form a disulfide bridge. The active-site Charge relay system is the His42. An N-linked (GlcNAc...) asparagine glycan is attached at Asn80. The active-site Charge relay system is Asp87. Intrachain disulfides connect Cys119–Cys189, Cys151–Cys168, and Cys179–Cys204. The Charge relay system role is filled by Ser183.

The protein belongs to the peptidase S1 family. Snake venom subfamily. Expressed by the venom gland (at protein level). Expressed by the venom gland.

It localises to the secreted. The hydrolysis of TAMe (tosyl-arginine methyl ester) substrate is activated by Ca(2+), Fe(3+), Mg(2+) and Zn(2+), and inhibited by EDTA, PMSF and DTT. Thrombin-like enzyme that shows fibrinogenolytic activity against bovine fibrinogen alpha and beta chains, but not gamma chain. Hydrolyzes fibrin. Enhances ADP-induced human platelet aggregation. Has arginine esterase activity for TAMe (tosyl-arginine methyl ester) substrate. Reduces thrombin-induced thrombosis. Does not have hemorrhagic activity. Reduces the motility of human liver cancer HepG2 cells in a wound-healing assay. The protein is Thrombin-like enzyme agkihpin-2 of Gloydius halys (Chinese water mocassin).